The chain runs to 534 residues: Probable inorganic phosphate transporter 1-8 (534 aa).

Residues 1-21 lie on the Cytoplasmic side of the membrane; the sequence is MPIKVLSSLDVARTQWYHFKA. A helical membrane pass occupies residues 22–42; that stretch reads IIVAGMGLFTDAYDLFCIAPV. Over 43–61 the chain is Extracellular; the sequence is MKMISHVYYNGDSINTAVL. A helical membrane pass occupies residues 62–82; that stretch reads STSYAIALLGTATGQLVFGYL. The Cytoplasmic portion of the chain corresponds to 83-90; it reads GDRVGRRR. The helical transmembrane segment at 91–111 threads the bilayer; that stretch reads VYGLCLIIMILSSFGCGFSVC. At 112–123 the chain is on the extracellular side; that stretch reads TTRRSCVMVSLG. Residues 124–144 form a helical membrane-spanning segment; it reads FFRFFLGLGIGGDYPLSATIM. At 145–153 the chain is on the cytoplasmic side; the sequence is SEFANKRTR. Residues 154 to 174 form a helical membrane-spanning segment; that stretch reads GAFIAAVFSMQGLGILVSSAV. At 175 to 199 the chain is on the extracellular side; that stretch reads TMAVCVAFKRSGGGLEVDAAAPTEA. Residues 200–220 traverse the membrane as a helical segment; the sequence is DLAWRLILMIGALPAALTFYW. Over 221-281 the chain is Cytoplasmic; sequence RMLMPETARY…KLFSRCFFRL (61 aa). A helical transmembrane segment spans residues 282-302; that stretch reads HGRDLFAASFNWFLVDIVFYT. Residues 303–333 are Extracellular-facing; sequence SNLLLSHIFSHYSKKPSTAENVYDAAFEVAE. Residues 334–354 traverse the membrane as a helical segment; it reads LGAIIAACSTIPGYWFTVYFI. At 355–361 the chain is on the cytoplasmic side; the sequence is DKIGRVK. A helical transmembrane segment spans residues 362–382; it reads IQIMGFFFMAVIYLVAGIPYS. Over 383–396 the chain is Extracellular; it reads WYWSKHEHNNKGFM. A helical membrane pass occupies residues 397–417; the sequence is VLYGLVFFFCNFGPNTTTFII. The Cytoplasmic portion of the chain corresponds to 418 to 431; sequence PAEHFPARFRSTCH. A helical transmembrane segment spans residues 432 to 452; sequence GISGAAGKLGAIVGTVGFLWA. Over 453 to 472 the chain is Extracellular; it reads TKKMESDDKNQIYPEVNRMR. The chain crosses the membrane as a helical span at residues 473-493; it reads IAFLILGGVCIAGILVTYFFT. The Cytoplasmic portion of the chain corresponds to 494–534; it reads KETMGRSLEENEHDQDNNAESEDEPQIVDGQSSVSTLLQTR. The disordered stretch occupies residues 501-534; that stretch reads LEENEHDQDNNAESEDEPQIVDGQSSVSTLLQTR. A compositionally biased stretch (acidic residues) spans 510–519; it reads NNAESEDEPQ. Position 514 is a phosphoserine (serine 514). Residues 522–534 show a composition bias toward polar residues; sequence DGQSSVSTLLQTR.

The protein belongs to the major facilitator superfamily. Phosphate:H(+) symporter (TC 2.A.1.9) family. As to expression, in roots.

The protein resides in the membrane. In terms of biological role, high-affinity transporter for external inorganic phosphate. This chain is Probable inorganic phosphate transporter 1-8 (PHT1-8), found in Arabidopsis thaliana (Mouse-ear cress).